The chain runs to 193 residues: 3-isopropylmalate dehydratase small subunit (193 aa).

This sequence belongs to the LeuD family. LeuD type 1 subfamily. As to quaternary structure, heterodimer of LeuC and LeuD.

The catalysed reaction is (2R,3S)-3-isopropylmalate = (2S)-2-isopropylmalate. The protein operates within amino-acid biosynthesis; L-leucine biosynthesis; L-leucine from 3-methyl-2-oxobutanoate: step 2/4. Its function is as follows. Catalyzes the isomerization between 2-isopropylmalate and 3-isopropylmalate, via the formation of 2-isopropylmaleate. This chain is 3-isopropylmalate dehydratase small subunit, found in Listeria monocytogenes serotype 4b (strain CLIP80459).